The sequence spans 560 residues: Diphtheria toxin homolog CRM228 (560 aa).

Positions 1–25 are cleaved as a signal peptide; the sequence is MSRKLFASILIGALLGIGAPPSAHA. 2 residues coordinate NAD(+): His46 and Tyr90. The active site involves Glu173. 2 disulfides stabilise this stretch: Cys211–Cys226 and Cys486–Cys496.

In Corynebacterium diphtheriae, this protein is Diphtheria toxin homolog CRM228.